Consider the following 2100-residue polypeptide: General negative regulator of transcription subunit 1 (2100 aa).

A disordered region spans residues 1 to 36 (MKSQEQQTPETREKSSSTSESGHPISLDSKTPPPND). Phosphoserine is present on residues serine 1341 and serine 1568.

It is found in the cytoplasm. The protein localises to the nucleus. In terms of biological role, acts as a component of the CCR4-NOT core complex, which in the nucleus seems to be a general transcription factor, and in the cytoplasm the major mRNA deadenylase involved in mRNA turnover. The NOT protein subcomplex negatively regulates the basal and activated transcription of many genes. Preferentially affects TC-type TATA element-dependent transcription. Could directly or indirectly inhibit component(s) of the general transcription machinery. This is General negative regulator of transcription subunit 1 (not1) from Schizosaccharomyces pombe (strain 972 / ATCC 24843) (Fission yeast).